The primary structure comprises 356 residues: Protein-arginine kinase (356 aa).

The Phosphagen kinase C-terminal domain maps to 24–256 (IIISSRVRVA…RQILAQEQAA (233 aa)). ATP-binding positions include 27–31 (SSRVR), H93, R127, 178–182 (RASVM), and 209–214 (RGLYGE). The RDXXRA motif of the pArg binding pocket involved in allosteric regulation signature appears at 339-344 (RDIFRA).

It belongs to the ATP:guanido phosphotransferase family.

It catalyses the reaction L-arginyl-[protein] + ATP = N(omega)-phospho-L-arginyl-[protein] + ADP + H(+). Its activity is regulated as follows. Appears to be allosterically activated by the binding of pArg-containing polypeptides to the pArg-binding pocket localized in the C-terminal domain of McsB. Functionally, catalyzes the specific phosphorylation of arginine residues in proteins. The protein is Protein-arginine kinase of Pelotomaculum thermopropionicum (strain DSM 13744 / JCM 10971 / SI).